The following is a 647-amino-acid chain: tRNA uridine 5-carboxymethylaminomethyl modification enzyme MnmG (647 aa).

FAD contacts are provided by residues 22 to 27, V134, and S189; that span reads GAGHAG. 283-297 contacts NAD(+); it reads GARYCPSIEDKIMRF. Q380 provides a ligand contact to FAD.

It belongs to the MnmG family. In terms of assembly, homodimer. Heterotetramer of two MnmE and two MnmG subunits. FAD is required as a cofactor.

It localises to the cytoplasm. NAD-binding protein involved in the addition of a carboxymethylaminomethyl (cmnm) group at the wobble position (U34) of certain tRNAs, forming tRNA-cmnm(5)s(2)U34. The sequence is that of tRNA uridine 5-carboxymethylaminomethyl modification enzyme MnmG from Desulfotalea psychrophila (strain LSv54 / DSM 12343).